Consider the following 160-residue polypeptide: UPF0178 protein BB1267 (160 aa).

It belongs to the UPF0178 family.

This Bordetella bronchiseptica (strain ATCC BAA-588 / NCTC 13252 / RB50) (Alcaligenes bronchisepticus) protein is UPF0178 protein BB1267.